The primary structure comprises 268 residues: Dioscorin DB3S (268 aa).

In terms of domain architecture, Alpha-carbonic anhydrase spans 25–259 (DEFSYIEGNP…TNFRSVFYFE (235 aa)). Cys-50 and Cys-209 are joined by a disulfide. The Proton acceptor role is filled by His-91. Residues Asp-92, 117–119 (HFH), Gln-136, and 205–206 (TA) each bind L-ascorbate.

It belongs to the alpha-class carbonic anhydrase family. Monomer. Homodimer. Not glycosylated. In terms of tissue distribution, expressed in tuber (at protein level).

It catalyses the reaction hydrogencarbonate + H(+) = CO2 + H2O. It carries out the reaction 2 monodehydro-L-ascorbate radical + NADH + H(+) = 2 L-ascorbate + NAD(+). Storage protein of tuber. Involved in protection against oxidative stress. Has carbonate dehydratase and weak trypsin inhibitor activity detected by measuring the dehydration of sodium bicarbonate and the inhibition of trypsin-catalyzed hydrolysis of N-benzoyl-L-arginine-4-nitro anilide, respectively. Contrarily, no carbonate dehydratase or trypsin inhibitor activity detected by measuring the hydrolysis of 4-nitrophenyl acetate or the inhibition of bovine trypsin-catalyzed hydrolysis of N-benzoyl-L-arginine ethyl ester, respectively. Has dehydroascorbate (DHA) reductase and monodehydroascorbate (MDA) reductase activities. Catalyzes the reactions of carbonate dehydratase and DHA reductase independently of zinc and glutathione (GSH). The coupled reaction is capable of recycling a plant antioxidant ascorbate using ubiquitous compounds H(2)O and CO(2). Exhibits antioxidant activity. Able to scavenge 1,1-diphenyl-2-picrylhydrazyl (DPPH) radical and hydroxyl radicals. Exhibits immunomodulatory activity. Activates Toll-like receptor 4 signaling pathways by up-regulating the gene expression of pro-inflammatory cytokines, such as tumor necrosis factor alpha, interleukin-1 beta and interleukin-6, and chemokines RANTES and MCP-1, in mouse RAW 264.7 macrophages. Stimulates the phagocytosis of E.coli by the LPS-treated mouse macrophages. This Dioscorea polystachya (Chinese yam) protein is Dioscorin DB3S.